A 1927-amino-acid polypeptide reads, in one-letter code: Integrin beta-like protein A (1927 aa).

An N-terminal signal peptide occupies residues 1–20 (MNRILTLFILFISLFIVCEA). Residues 21-1860 (THFRFGTMSW…KENNNKTVLT (1840 aa)) are Extracellular-facing. An N-linked (GlcNAc...) asparagine glycan is attached at N309. An EGF-like domain is found at 425-462 (YGEKCDPVDPCVNGESNEGSQGNGKCTCYYGWEGKNCD). Intrachain disulfides connect C435–C450 and C452–C461. The 188-residue stretch at 522–709 (EVLVLVDSQP…VLSKAVVKAI (188 aa)) folds into the VWFA domain. N1122, N1516, N1717, N1723, and N1855 each carry an N-linked (GlcNAc...) asparagine glycan. A helical membrane pass occupies residues 1861-1881 (GAIAGAAAGAGLLAAGAWFLL). The Cytoplasmic portion of the chain corresponds to 1882–1927 (KKSAPPTDAFFGEGAFADGAVSTNPMYEESGRSAINPLYEASSENL).

Belongs to the SIB family. Interacts with talA/talin.

The protein localises to the membrane. Functionally, implicated in cellular adhesion to substrate or phagocytic particles. This is Integrin beta-like protein A (sibA) from Dictyostelium discoideum (Social amoeba).